A 1399-amino-acid chain; its full sequence is DNA-directed RNA polymerase subunit beta' (1399 aa).

Residues cysteine 70, cysteine 72, cysteine 85, and cysteine 88 each coordinate Zn(2+). Residues aspartate 460, aspartate 462, and aspartate 464 each coordinate Mg(2+). Residues cysteine 814, cysteine 888, cysteine 895, and cysteine 898 each coordinate Zn(2+).

This sequence belongs to the RNA polymerase beta' chain family. As to quaternary structure, the RNAP catalytic core consists of 2 alpha, 1 beta, 1 beta' and 1 omega subunit. When a sigma factor is associated with the core the holoenzyme is formed, which can initiate transcription. Requires Mg(2+) as cofactor. Zn(2+) is required as a cofactor.

The enzyme catalyses RNA(n) + a ribonucleoside 5'-triphosphate = RNA(n+1) + diphosphate. DNA-dependent RNA polymerase catalyzes the transcription of DNA into RNA using the four ribonucleoside triphosphates as substrates. The protein is DNA-directed RNA polymerase subunit beta' of Pseudomonas syringae pv. syringae (strain B728a).